The chain runs to 183 residues: UPF0397 protein stu0306/stu0307 (183 aa).

A run of 5 helical transmembrane segments spans residues 11 to 31, 44 to 64, 74 to 94, 111 to 131, and 149 to 169; these read ATGI…IPIF, VLFS…GFIG, GDIS…IGLF, IWFN…VTPI, and FVAG…LLAI.

This sequence belongs to the UPF0397 family.

It is found in the cell membrane. The polypeptide is UPF0397 protein stu0306/stu0307 (Streptococcus thermophilus (strain ATCC BAA-250 / LMG 18311)).